The following is a 377-amino-acid chain: MENLSSACTHFCFDLFKKINENNSTGNLFFSPISLSTALAMVFLGTKGKTAEQMSKTLHFDAVKDLHSNFQTLNAEINKKDVSTYALNLANRLFGEKTFNFLPNFLSSVKKQYSADLGTVDFISALEDARKEINKWVSEQTKGKIPEVLSTGTVDRSTKLVLVNAIYFKGDWAKKFNAEHTTDMPFQLNKKEQKTVKMMYQKEKLPFNYIPDINCRILELPYVDYELSMIIILPDNINDDTTGLQQLEKELSLEKIHEWTENMMPTDVHIHLPKFKLEDSYKLKSQLAGMGMVDLFNSGSADLSGMSGSNNLFLSEVIHKSFVEVNEEGTEAAAASAGIAMMCMMREEEFNADHPFLFLIRHNATKSILFFGRYSSP.

At M1 the chain carries N-acetylmethionine.

The protein belongs to the serpin family. Ov-serpin subfamily.

It is found in the cytoplasm. Its function is as follows. Regulates the activity of the neutrophil proteases. This Xenopus laevis (African clawed frog) protein is Leukocyte elastase inhibitor (serpinb1).